Reading from the N-terminus, the 330-residue chain is Nodulation protein D 2 (330 aa).

The HTH lysR-type domain maps to 6–63 (LDLNLLVALDALITERNLSSAARKINLSQPAMSAAVARLRKHFRDELFGMRGRELVLS). Positions 23–42 (LSSAARKINLSQPAMSAAVA) form a DNA-binding region, H-T-H motif. The interval 308 to 330 (RVTSSPEDAEPPGHFVRSVSPLP) is disordered.

It belongs to the LysR transcriptional regulatory family.

NodD regulates the expression of the nodABCFE genes which encode other nodulation proteins. NodD is also a negative regulator of its own expression. Binds flavonoids as inducers. The polypeptide is Nodulation protein D 2 (nodD2) (Bradyrhizobium diazoefficiens (strain JCM 10833 / BCRC 13528 / IAM 13628 / NBRC 14792 / USDA 110)).